A 250-amino-acid polypeptide reads, in one-letter code: Histone H1.3 (250 aa).

Disordered stretches follow at residues 17–53 (AASG…QMVD) and 104–250 (QTKG…ATKK). The span at 27-42 (KKAAATPKSKKSTAAP) shows a compositional bias: low complexity. Residues 44 to 118 (SHPPTQQMVD…GASGSFKLSR (75 aa)) enclose the H15 domain. The span at 120–133 (AKKDAKPKASAVEK) shows a compositional bias: basic and acidic residues. Low complexity predominate over residues 138–161 (VNASAAAATKRSSSTSTTKKAAGA). Residues 174–191 (KNVEKKKADKEKAKDAKK) show a composition bias toward basic and acidic residues. A compositionally biased stretch (low complexity) spans 192-234 (TGTIKAKLTTAKAKSSATKPKTPKPKTTSAKPKKVVSATTPKK). Positions 235-250 (TAVKKPKAKTASATKK) are enriched in basic residues.

It belongs to the histone H1/H5 family.

It is found in the nucleus. It localises to the chromosome. Functionally, histones H1 are necessary for the condensation of nucleosome chains into higher-order structures. This is Histone H1.3 (His1.3) from Drosophila virilis (Fruit fly).